Here is a 466-residue protein sequence, read N- to C-terminus: MNAETTDGKRVSIIGAKRSGIAAALLLQQRGATVYVSDREPVGDAERAFLEHHGIAFEEEGHTDRILEADFSVVSPGIPPHASVIRRLEHEAIPLFSEIEAASWFCPAFIIGITGTDGKTTTSSMVEAICLSGANSREQRVFSAGNIGVPFSSLVGEMRKGDIAVVELSSYQLERCRSFRPDVAVITNIMPDHLDRYGGSMKRYAEAKYRIYAQQRKQDTLVYNADDETLRAHFEGGGAFVPQLVPFSLDRKRASLGGACYAAIEGDWLITVVNGREEKVITGSGLFKRSFRGRHNLENALAAVAATRAAGVDVFPIREALRRFAGVEHRQEYVRTMHGVDWINDSKATNLNALRQALDATPGKLVLIAGGRDKGDDLSDLEERVRQKVSVLVVFGESKAKFTEAFSSVVRVVPALSLEEAVEQAQRYASTGETVLFSPGCSSFDMFESFEERGMRFKKHVEGMQS.

115 to 121 (GTDGKTT) serves as a coordination point for ATP.

It belongs to the MurCDEF family.

It localises to the cytoplasm. The catalysed reaction is UDP-N-acetyl-alpha-D-muramoyl-L-alanine + D-glutamate + ATP = UDP-N-acetyl-alpha-D-muramoyl-L-alanyl-D-glutamate + ADP + phosphate + H(+). Its pathway is cell wall biogenesis; peptidoglycan biosynthesis. Functionally, cell wall formation. Catalyzes the addition of glutamate to the nucleotide precursor UDP-N-acetylmuramoyl-L-alanine (UMA). In Chlorobium phaeobacteroides (strain BS1), this protein is UDP-N-acetylmuramoylalanine--D-glutamate ligase.